Consider the following 340-residue polypeptide: Heat-inducible transcription repressor HrcA (340 aa).

This sequence belongs to the HrcA family.

Functionally, negative regulator of class I heat shock genes (grpE-dnaK-dnaJ and groELS operons). Prevents heat-shock induction of these operons. In Burkholderia mallei (strain NCTC 10247), this protein is Heat-inducible transcription repressor HrcA.